Reading from the N-terminus, the 121-residue chain is Protein SNORC (121 aa).

A signal peptide spans 1–24; the sequence is MASCLALRMALLLVSGVLAPAVLT. Over 25–92 the chain is Extracellular; that stretch reads DDVPQEPVPT…QGGGSLGPGA (68 aa). Residues 28–84 form a disordered region; the sequence is PQEPVPTLWNEPAELPSGEGPVESTSPGREPVDTGPPAPTVAPGPEDSTAQERLDQG. A helical transmembrane segment spans residues 93 to 113; the sequence is IAAIVIAALLATCVVLALVVV. At 114–121 the chain is on the cytoplasmic side; sequence ALRKFSAS.

In terms of assembly, interacts (via the extracellular domain) with FGF2. Expressed in cartilage.

Its subcellular location is the membrane. It localises to the cytoplasm. The protein resides in the secreted. The protein localises to the extracellular space. It is found in the extracellular matrix. In terms of biological role, plays a role in the regulation of chondrocyte maturation and postnatal endochondral ossification. May inhibit cell growth stimulation induced by FGF2. This Homo sapiens (Human) protein is Protein SNORC.